Consider the following 411-residue polypeptide: Putative acid phosphatase 10 (411 aa).

Residue His33 is the Nucleophile of the active site. Residue Asp313 is the Proton donor of the active site. A disulfide bridge links Cys379 with Cys385.

This sequence belongs to the histidine acid phosphatase family.

It catalyses the reaction a phosphate monoester + H2O = an alcohol + phosphate. The chain is Putative acid phosphatase 10 (pho-10) from Caenorhabditis elegans.